The following is a 652-amino-acid chain: RNA-binding KH domain-containing protein RCF3 (652 aa).

A compositionally biased stretch (basic and acidic residues) spans 1–14 (MERSRSKRNYHYDQ). The disordered stretch occupies residues 1–63 (MERSRSKRNY…NGRPSKSHPE (63 aa)). Residues 34–55 (FGGGGGGNNRYRGGGGGGGGNG) are compositionally biased toward gly residues. KH domains are found at residues 67–139 (TTTY…QEAL) and 175–245 (RVVT…LAIV). A disordered region spans residues 253-307 (QHRDRSNFQGRSHSPERSFAAAGDDYMPQLRRQSSDRFPRGNFRNNNFSSRQSNY). The span at 292–306 (RGNFRNNNFSSRQSN) shows a compositional bias: low complexity. 3 consecutive KH domains span residues 324–391 (ELVF…QEAL), 408–476 (LITT…LVEL), and 576–640 (RSTL…QSLL).

Homodimer. Interacts with CPL1. Interacts with RS40 and RS41. Interacts with DRB1/HYL1 and SE. Interacts with CPL2. Expressed in roots, cotyledons, leaves, flowers and siliques.

It is found in the nucleus. It localises to the nucleus speckle. In terms of biological role, acts as a negative regulator of osmotic stress-induced gene expression. Involved in the regulation of thermotolerance responses under heat stress. Functions as an upstream regulator of heat stress transcription factor (HSF) genes. Negatively regulates HSFA1A, HSFA1B and HSFA1D, but positively controls the expression of HSFA1E, HSFA3, HSFA9, HSFB3, and DREB2C. Forms a complex with CPL1 that modulates co-transcriptional processes such as mRNA capping and polyadenylation, and functions to repress stress-inducible gene expression. Regulates pre-mRNA processing under salt stress. Involved in primary miRNA processing and pri-miRNA biogenesis. Binds both intronless and intron-containing pri-miRNAs. Acts as a regulator of biotic stress response gene expression and basal JA-mediated responses involved in defense. Acts as a negative regulator of resistance to the fungal pathogen Fusarium oxysporum. This is RNA-binding KH domain-containing protein RCF3 from Arabidopsis thaliana (Mouse-ear cress).